A 428-amino-acid chain; its full sequence is S-adenosylmethionine synthase (428 aa).

H14 contacts ATP. Residue D16 participates in Mg(2+) binding. E42 contributes to the K(+) binding site. L-methionine-binding residues include E55 and Q98. Residues 98–108 (QSGDINRGVER) form a flexible loop region. Residues 165 to 167 (DAK), 251 to 252 (KF), D260, 266 to 267 (RK), A283, and K287 each bind ATP. D260 contacts L-methionine. An L-methionine-binding site is contributed by K291.

This sequence belongs to the AdoMet synthase family. In terms of assembly, homotetramer; dimer of dimers. It depends on Mg(2+) as a cofactor. The cofactor is K(+).

The protein localises to the cytoplasm. The enzyme catalyses L-methionine + ATP + H2O = S-adenosyl-L-methionine + phosphate + diphosphate. It participates in amino-acid biosynthesis; S-adenosyl-L-methionine biosynthesis; S-adenosyl-L-methionine from L-methionine: step 1/1. Catalyzes the formation of S-adenosylmethionine (AdoMet) from methionine and ATP. The overall synthetic reaction is composed of two sequential steps, AdoMet formation and the subsequent tripolyphosphate hydrolysis which occurs prior to release of AdoMet from the enzyme. In Parabacteroides distasonis (strain ATCC 8503 / DSM 20701 / CIP 104284 / JCM 5825 / NCTC 11152), this protein is S-adenosylmethionine synthase.